The sequence spans 318 residues: Putative enoyl-CoA hydratase EchA13 (318 aa).

The interval 90-110 (LGSADDIRERSPGPDQHPSYR) is disordered.

It belongs to the enoyl-CoA hydratase/isomerase family.

This is Putative enoyl-CoA hydratase EchA13 (echA13) from Mycobacterium tuberculosis (strain ATCC 25618 / H37Rv).